A 460-amino-acid chain; its full sequence is ATP synthase subunit beta (460 aa).

ATP is bound at residue 150–157 (GGAGVGKT).

It belongs to the ATPase alpha/beta chains family. As to quaternary structure, F-type ATPases have 2 components, CF(1) - the catalytic core - and CF(0) - the membrane proton channel. CF(1) has five subunits: alpha(3), beta(3), gamma(1), delta(1), epsilon(1). CF(0) has three main subunits: a(1), b(2) and c(9-12). The alpha and beta chains form an alternating ring which encloses part of the gamma chain. CF(1) is attached to CF(0) by a central stalk formed by the gamma and epsilon chains, while a peripheral stalk is formed by the delta and b chains.

Its subcellular location is the cell inner membrane. It carries out the reaction ATP + H2O + 4 H(+)(in) = ADP + phosphate + 5 H(+)(out). In terms of biological role, produces ATP from ADP in the presence of a proton gradient across the membrane. The catalytic sites are hosted primarily by the beta subunits. The chain is ATP synthase subunit beta from Citrobacter koseri (strain ATCC BAA-895 / CDC 4225-83 / SGSC4696).